The sequence spans 256 residues: Small ribosomal subunit protein eS1 (256 aa).

Positions 1-18 (MAVGKNKRLSKGKKGLKK) are enriched in basic residues. Residues 1 to 20 (MAVGKNKRLSKGKKGLKKKA) form a disordered region. Alanine 2 is modified (N-acetylalanine; partial).

The protein belongs to the eukaryotic ribosomal protein eS1 family. In terms of assembly, component of the small ribosomal subunit. Mature ribosomes consist of a small (40S) and a large (60S) subunit. The 40S subunit contains about 33 different proteins and 1 molecule of RNA (18S). The 60S subunit contains about 49 different proteins and 3 molecules of RNA (25S, 5.8S and 5S).

Its subcellular location is the cytoplasm. The chain is Small ribosomal subunit protein eS1 from Chaetomium globosum (strain ATCC 6205 / CBS 148.51 / DSM 1962 / NBRC 6347 / NRRL 1970) (Soil fungus).